Reading from the N-terminus, the 191-residue chain is Holliday junction branch migration complex subunit RuvA (191 aa).

The tract at residues 1–64 (MIGTLSGIIE…DNVPQLYGFT (64 aa)) is domain I. The domain II stretch occupies residues 65-145 (DTEEQNCLKM…FNIMDKRGPS (81 aa)). The flexible linker stretch occupies residues 146–149 (VEDS). The domain III stretch occupies residues 149–191 (SDALSALLSLGYEKTRVLNALEKVGVSHNLSDTVRFALKELSK).

The protein belongs to the RuvA family. In terms of assembly, homotetramer. Forms an RuvA(8)-RuvB(12)-Holliday junction (HJ) complex. HJ DNA is sandwiched between 2 RuvA tetramers; dsDNA enters through RuvA and exits via RuvB. An RuvB hexamer assembles on each DNA strand where it exits the tetramer. Each RuvB hexamer is contacted by two RuvA subunits (via domain III) on 2 adjacent RuvB subunits; this complex drives branch migration. In the full resolvosome a probable DNA-RuvA(4)-RuvB(12)-RuvC(2) complex forms which resolves the HJ.

It localises to the cytoplasm. Its function is as follows. The RuvA-RuvB-RuvC complex processes Holliday junction (HJ) DNA during genetic recombination and DNA repair, while the RuvA-RuvB complex plays an important role in the rescue of blocked DNA replication forks via replication fork reversal (RFR). RuvA specifically binds to HJ cruciform DNA, conferring on it an open structure. The RuvB hexamer acts as an ATP-dependent pump, pulling dsDNA into and through the RuvAB complex. HJ branch migration allows RuvC to scan DNA until it finds its consensus sequence, where it cleaves and resolves the cruciform DNA. This chain is Holliday junction branch migration complex subunit RuvA, found in Anaplasma phagocytophilum (strain HZ).